A 167-amino-acid chain; its full sequence is MDNSMDINDILLSDDNDYKSYDEDDDSISDIGETSDDCCTTKQSDSRIESFKFDETTQSPHPKQLSERIKAIKQRYTRRISLFEITGILSESYNLLQRGRIPLLNDLTEETFKDSIINIMFKEIEQGNCPIVIQKNGELLSLTDFDKKGVQYHLDYIKTIWRNQRKL.

Positions 15-41 are disordered; it reads DNDYKSYDEDDDSISDIGETSDDCCTT. The segment covering 22–36 has biased composition (acidic residues); the sequence is DEDDDSISDIGETSD.

Belongs to the poxviridae DNA-directed RNA polymerase 19 kDa subunit family. In terms of assembly, the DNA-dependent RNA polymerase used for intermediate and late genes expression consists of eight subunits (147) kDa, 133 kDa, 35 kDa, 30 kDa, 22 kDa, 19 kDa, 18 kDa and 7 kDa totalling more than 500 kDa in mass. The same holoenzyme, with the addition of the transcription-specificity factor RAP94, is used for early gene expression.

Its subcellular location is the virion. It catalyses the reaction RNA(n) + a ribonucleoside 5'-triphosphate = RNA(n+1) + diphosphate. Part of the DNA-dependent RNA polymerase which catalyzes the transcription of viral DNA into RNA using the four ribonucleoside triphosphates as substrates. Responsible for the transcription of early, intermediate and late genes. DNA-dependent RNA polymerase associates with the early transcription factor (ETF) thereby allowing the early genes transcription. Late transcription, and probably also intermediate transcription, require newly synthesized RNA polymerase. This Vertebrata (FPV) protein is DNA-directed RNA polymerase 19 kDa subunit (RPO19).